The sequence spans 82 residues: MPSPEMESRLKKIVAEQLGVDESKIVPEARFTEDLNADSLDLVEMIMELEEAFGVEIPDEDAEKIMTVQDALNYIEQKLQAA.

Residues 4-79 (PEMESRLKKI…DALNYIEQKL (76 aa)) form the Carrier domain. An O-(pantetheine 4'-phosphoryl)serine modification is found at S39.

It belongs to the acyl carrier protein (ACP) family. In terms of processing, 4'-phosphopantetheine is transferred from CoA to a specific serine of apo-ACP by AcpS. This modification is essential for activity because fatty acids are bound in thioester linkage to the sulfhydryl of the prosthetic group.

The protein localises to the cytoplasm. It participates in lipid metabolism; fatty acid biosynthesis. Carrier of the growing fatty acid chain in fatty acid biosynthesis. The sequence is that of Acyl carrier protein from Roseiflexus sp. (strain RS-1).